The chain runs to 228 residues: MNNLLRCHQVCKTYQEGELQTQVLKGVSFELKRGELVSIIGSSGSGKSTLLHILGALDDASEGQVEFLGQSLHQLSSNKQAKIRNQHLGFVYQFHHLLADFSALENVAMPLLIGGMNVAKAKAKAQSLLERVGLGHRVAHRPSELSGGERQRVAIARALVNKPDLVLADEPTGNLDHKTALSIYDLMRELNRESGTAFLVVTHDGELAAKMDRHMHMKDGLLTDITGA.

An ABC transporter domain is found at 5-228 (LRCHQVCKTY…DGLLTDITGA (224 aa)). Residue 41–48 (GSSGSGKS) coordinates ATP.

It belongs to the ABC transporter superfamily. Lipoprotein translocase (TC 3.A.1.125) family. In terms of assembly, the complex is composed of two ATP-binding proteins (LolD) and two transmembrane proteins (LolC and LolE).

The protein localises to the cell inner membrane. Functionally, part of the ABC transporter complex LolCDE involved in the translocation of mature outer membrane-directed lipoproteins, from the inner membrane to the periplasmic chaperone, LolA. Responsible for the formation of the LolA-lipoprotein complex in an ATP-dependent manner. This Vibrio cholerae serotype O1 (strain ATCC 39315 / El Tor Inaba N16961) protein is Lipoprotein-releasing system ATP-binding protein LolD.